Here is a 299-residue protein sequence, read N- to C-terminus: Probable 4-deoxy-4-formamido-L-arabinose-phosphoundecaprenol deformylase ArnD (299 aa).

The NodB homology domain occupies 2–263; the sequence is IDVGLRIDVD…EASARGIRFV (262 aa).

The protein belongs to the polysaccharide deacetylase family. ArnD deformylase subfamily.

It carries out the reaction 4-deoxy-4-formamido-alpha-L-arabinopyranosyl di-trans,octa-cis-undecaprenyl phosphate + H2O = 4-amino-4-deoxy-alpha-L-arabinopyranosyl di-trans,octa-cis-undecaprenyl phosphate + formate. The protein operates within glycolipid biosynthesis; 4-amino-4-deoxy-alpha-L-arabinose undecaprenyl phosphate biosynthesis; 4-amino-4-deoxy-alpha-L-arabinose undecaprenyl phosphate from UDP-4-deoxy-4-formamido-beta-L-arabinose and undecaprenyl phosphate: step 2/2. It participates in bacterial outer membrane biogenesis; lipopolysaccharide biosynthesis. Functionally, catalyzes the deformylation of 4-deoxy-4-formamido-L-arabinose-phosphoundecaprenol to 4-amino-4-deoxy-L-arabinose-phosphoundecaprenol. The modified arabinose is attached to lipid A and is required for resistance to polymyxin and cationic antimicrobial peptides. The polypeptide is Probable 4-deoxy-4-formamido-L-arabinose-phosphoundecaprenol deformylase ArnD (Aeromonas salmonicida (strain A449)).